Consider the following 506-residue polypeptide: Probable alpha-L-arabinofuranosidase B (506 aa).

An N-terminal signal peptide occupies residues 1–26 (MLPQLSIERASVFALGLIATGSLVVA). The segment at 27 to 343 (GPCDIYSAGG…ANIVAAKYAT (317 aa)) is catalytic. Cystine bridges form between Cys29/Cys39, Cys89/Cys94, and Cys184/Cys185. Position 227 (Asp227) interacts with substrate. Glu229 serves as the catalytic Nucleophile. Asn230 serves as a coordination point for substrate. The N-linked (GlcNAc...) asparagine glycan is linked to Asn240. Gly304 lines the substrate pocket. The Proton donor role is filled by Asp305. The tract at residues 344 to 506 (ASLTSGPKLT…VSWVISTGFA (163 aa)) is ABD. Cys409 and Cys447 are disulfide-bonded. Residues His424, Asn426, Phe427, Asp443, His471, Leu476, and Asp496 each coordinate substrate.

The protein belongs to the glycosyl hydrolase 54 family.

It is found in the secreted. The enzyme catalyses Hydrolysis of terminal non-reducing alpha-L-arabinofuranoside residues in alpha-L-arabinosides.. It participates in glycan metabolism; L-arabinan degradation. In terms of biological role, alpha-L-arabinofuranosidase involved in the degradation of arabinoxylan, a major component of plant hemicellulose. Able to hydrolyze 1,5-, 1,3- and 1,2-alpha-linkages not only in L-arabinofuranosyl oligosaccharides, but also in polysaccharides containing terminal non-reducing L-arabinofuranoses in side chains, like L-arabinan, arabinogalactan and arabinoxylan. The protein is Probable alpha-L-arabinofuranosidase B (abfB) of Aspergillus fumigatus (strain ATCC MYA-4609 / CBS 101355 / FGSC A1100 / Af293) (Neosartorya fumigata).